The primary structure comprises 372 residues: Cobalt-precorrin-5B C(1)-methyltransferase (372 aa).

The protein belongs to the CbiD family.

It catalyses the reaction Co-precorrin-5B + S-adenosyl-L-methionine = Co-precorrin-6A + S-adenosyl-L-homocysteine. It functions in the pathway cofactor biosynthesis; adenosylcobalamin biosynthesis; cob(II)yrinate a,c-diamide from sirohydrochlorin (anaerobic route): step 6/10. In terms of biological role, catalyzes the methylation of C-1 in cobalt-precorrin-5B to form cobalt-precorrin-6A. The sequence is that of Cobalt-precorrin-5B C(1)-methyltransferase from Geobacillus thermodenitrificans (strain NG80-2).